The primary structure comprises 215 residues: Peroxiredoxin (215 aa).

One can recognise a Thioredoxin domain in the interval 6–161 (PLIGEEFPRL…ILRAVRALQT (156 aa)). Cys-48 serves as the catalytic Cysteine sulfenic acid (-SOH) intermediate. Arg-124 contacts substrate. Cys-205 and Cys-211 are oxidised to a cystine.

Belongs to the peroxiredoxin family. Prx6 subfamily. As to quaternary structure, homodecamer. Pentamer of dimers that assemble into a ring structure.

It localises to the cytoplasm. It catalyses the reaction a hydroperoxide + [thioredoxin]-dithiol = an alcohol + [thioredoxin]-disulfide + H2O. Functionally, thiol-specific peroxidase that catalyzes the reduction of hydrogen peroxide and organic hydroperoxides to water and alcohols, respectively. Plays a role in cell protection against oxidative stress by detoxifying peroxides. This Thermotoga petrophila (strain ATCC BAA-488 / DSM 13995 / JCM 10881 / RKU-1) protein is Peroxiredoxin.